A 1013-amino-acid polypeptide reads, in one-letter code: Prominin-like protein (1013 aa).

Residues 32–52 traverse the membrane as a helical segment; sequence IAYLAICGLSVAIFGFALATL. Residues Asn99 and Asn116 are each glycosylated (N-linked (GlcNAc...) asparagine). 3 helical membrane-spanning segments follow: residues 215–235, 489–509, and 535–555; these read CGIC…IAFV, VVSL…IFAL, and LLLA…VGLF. Residues Asn576, Asn618, Asn803, and Asn824 are each glycosylated (N-linked (GlcNAc...) asparagine). Residues 852–872 traverse the membrane as a helical segment; the sequence is INGFWVGILLCALLFLPILFV. The disordered stretch occupies residues 918–1013; that stretch reads ANVPKKRRKA…YYYPGASEQD (96 aa). An N-linked (GlcNAc...) asparagine glycan is attached at Asn949. Residues 950 to 963 are compositionally biased toward gly residues; the sequence is RSGGDRGGGGGDGA.

It belongs to the prominin family.

It is found in the membrane. This Drosophila melanogaster (Fruit fly) protein is Prominin-like protein.